A 92-amino-acid polypeptide reads, in one-letter code: MTRSLKKGPFVDHHLVAKADKAVTTKDKKPIKTWSRRSMVLPEFIGLTIAVHNGKQHVPVYITDQMVGHKLGEFALTRTFKGHPADKKVQKK.

This sequence belongs to the universal ribosomal protein uS19 family.

Functionally, protein S19 forms a complex with S13 that binds strongly to the 16S ribosomal RNA. This chain is Small ribosomal subunit protein uS19, found in Variovorax paradoxus (strain S110).